The sequence spans 181 residues: Oligoribonuclease (181 aa).

Residues 8–171 (LIWIDLEMTG…DDIRESIAEL (164 aa)) form the Exonuclease domain. The active site involves tyrosine 129.

The protein belongs to the oligoribonuclease family.

It localises to the cytoplasm. Functionally, 3'-to-5' exoribonuclease specific for small oligoribonucleotides. The sequence is that of Oligoribonuclease from Vibrio vulnificus (strain CMCP6).